The following is a 136-amino-acid chain: uncharacterized protein (136 aa).

Residues 102–118 (FVIVFFFFSFSLSISCV) form a helical membrane-spanning segment.

It is found in the membrane. This is an uncharacterized protein from Saccharomyces cerevisiae (strain ATCC 204508 / S288c) (Baker's yeast).